The following is a 141-amino-acid chain: Hemoglobin subunit alpha (141 aa).

In terms of domain architecture, Globin spans 1–141 (VLSPTDKTNV…VSTVLTSKYR (141 aa)). Position 3 is a phosphoserine (S3). K7 carries the N6-succinyllysine modification. Phosphothreonine is present on T8. K11 carries the post-translational modification N6-succinyllysine. Phosphotyrosine is present on Y24. At S35 the chain carries Phosphoserine. Residue K40 is modified to N6-succinyllysine. S49 is modified (phosphoserine). H58 contributes to the O2 binding site. Residue H87 participates in heme b binding. At S102 the chain carries Phosphoserine. T108 carries the phosphothreonine modification. S124 bears the Phosphoserine mark. 2 positions are modified to phosphothreonine: T134 and T137. S138 carries the phosphoserine modification.

Belongs to the globin family. In terms of assembly, heterotetramer of two alpha chains and two beta chains. As to expression, red blood cells.

Functionally, involved in oxygen transport from the lung to the various peripheral tissues. Its function is as follows. Hemopressin acts as an antagonist peptide of the cannabinoid receptor CNR1. Hemopressin-binding efficiently blocks cannabinoid receptor CNR1 and subsequent signaling. This chain is Hemoglobin subunit alpha (HBA), found in Rhinoceros unicornis (Greater Indian rhinoceros).